The primary structure comprises 363 residues: Endopolygalacturonase B (363 aa).

Residues 1 to 20 (MQLLQSSVIAATVGAALVAA) form the signal peptide. The propeptide occupies 21-28 (VPVELKAR). C31 and C46 are joined by a disulfide. PbH1 repeat units lie at residues 158-187 (SDNL…DVGS), 188-209 (STYI…AINS), 210-230 (GSHI…SIGS), 239-260 (VEDV…RIKT), 268-290 (VSNV…IVEQ), and 302-347 (TNGI…SITG). N-linked (GlcNAc...) asparagine glycosylation is present at N162. D202 functions as the Proton donor in the catalytic mechanism. The cysteines at positions 204 and 220 are disulfide-linked. Residue H224 is part of the active site. Disulfide bonds link C330-C335 and C354-C363. N-linked (GlcNAc...) asparagine glycosylation is present at N356.

It belongs to the glycosyl hydrolase 28 family.

It localises to the secreted. It carries out the reaction (1,4-alpha-D-galacturonosyl)n+m + H2O = (1,4-alpha-D-galacturonosyl)n + (1,4-alpha-D-galacturonosyl)m.. Its function is as follows. Involved in maceration and soft-rotting of plant tissue. Hydrolyzes the 1,4-alpha glycosidic bonds of de-esterified pectate in the smooth region of the plant cell wall. In Aspergillus oryzae (strain ATCC 42149 / RIB 40) (Yellow koji mold), this protein is Endopolygalacturonase B (pgaB).